Here is a 65-residue protein sequence, read N- to C-terminus: Large ribosomal subunit protein bL35 (65 aa).

The interval 1 to 25 (MPKMKSHRGAAKRFKKTGTGKLKRA) is disordered.

This sequence belongs to the bacterial ribosomal protein bL35 family.

The sequence is that of Large ribosomal subunit protein bL35 from Clostridium botulinum (strain Alaska E43 / Type E3).